A 395-amino-acid polypeptide reads, in one-letter code: MEKTLAVNAGSSSLKWQLYEMPEETVIAKGIFERIGLSGSISTTKFNNEEHFRKQEIVDHRQAVLLLMDELIHFKLIHEFREITGIGHRVVAGGEFFKTSTVISPEVLAEIKNLSTLAPLHNPANVLGIEAFQRLLPDALAVAVFDTAFHSTLPEKAYRYPIPTKYYEDYSIRKYGAHGTSHMYVAQEAEKVLGKPLEDLKLITAHIGNGASITAIEAGKSVDTSMGFTPLAGVMMGTRAGEMDASVIPYMLESDPSLRNAQDVIDILNKDSGVLGVSELSSDMRDLSEAVAKGNPKAILAYEMYVDRLKKFIAQYFGVLNGADALIFTAGVGENDTAVRTDVVNGLSWFGMEIDESKNVRGAFGIISKPESKVKVLVVPTNEELVIARDVEAAK.

A Mg(2+)-binding site is contributed by Asn8. Lys15 provides a ligand contact to ATP. Arg89 lines the substrate pocket. The active-site Proton donor/acceptor is Asp146. ATP contacts are provided by residues His206–Gly210, Asp283–Arg285, and Gly331–Asn335. Glu383 contacts Mg(2+).

It belongs to the acetokinase family. Homodimer. Requires Mg(2+) as cofactor. It depends on Mn(2+) as a cofactor.

It is found in the cytoplasm. It catalyses the reaction acetate + ATP = acetyl phosphate + ADP. It functions in the pathway metabolic intermediate biosynthesis; acetyl-CoA biosynthesis; acetyl-CoA from acetate: step 1/2. Its function is as follows. Catalyzes the formation of acetyl phosphate from acetate and ATP. Can also catalyze the reverse reaction. The protein is Acetate kinase 2 of Lactococcus lactis subsp. lactis (strain IL1403) (Streptococcus lactis).